A 363-amino-acid chain; its full sequence is Phosphoserine aminotransferase (363 aa).

Arg-42 serves as a coordination point for L-glutamate. Pyridoxal 5'-phosphate-binding positions include 76-77 (GR), Trp-102, Thr-156, Asp-175, and Gln-198. N6-(pyridoxal phosphate)lysine is present on Lys-199. 240–241 (NT) serves as a coordination point for pyridoxal 5'-phosphate.

Belongs to the class-V pyridoxal-phosphate-dependent aminotransferase family. SerC subfamily. In terms of assembly, homodimer. Pyridoxal 5'-phosphate serves as cofactor.

The protein localises to the cytoplasm. The enzyme catalyses O-phospho-L-serine + 2-oxoglutarate = 3-phosphooxypyruvate + L-glutamate. It carries out the reaction 4-(phosphooxy)-L-threonine + 2-oxoglutarate = (R)-3-hydroxy-2-oxo-4-phosphooxybutanoate + L-glutamate. Its pathway is amino-acid biosynthesis; L-serine biosynthesis; L-serine from 3-phospho-D-glycerate: step 2/3. It functions in the pathway cofactor biosynthesis; pyridoxine 5'-phosphate biosynthesis; pyridoxine 5'-phosphate from D-erythrose 4-phosphate: step 3/5. Catalyzes the reversible conversion of 3-phosphohydroxypyruvate to phosphoserine and of 3-hydroxy-2-oxo-4-phosphonooxybutanoate to phosphohydroxythreonine. This is Phosphoserine aminotransferase from Shewanella baltica (strain OS223).